A 343-amino-acid chain; its full sequence is L-threonine 3-dehydrogenase (343 aa).

Zn(2+) is bound at residue Cys40. Residues Thr42 and His45 each act as charge relay system in the active site. Positions 65, 66, 95, 98, 101, and 109 each coordinate Zn(2+). Residues Ile177, Asp197, Arg202, 264-266, and 288-289 contribute to the NAD(+) site; these read LGI and IY.

This sequence belongs to the zinc-containing alcohol dehydrogenase family. As to quaternary structure, homotetramer. Zn(2+) serves as cofactor.

It is found in the cytoplasm. It catalyses the reaction L-threonine + NAD(+) = (2S)-2-amino-3-oxobutanoate + NADH + H(+). It participates in amino-acid degradation; L-threonine degradation via oxydo-reductase pathway; glycine from L-threonine: step 1/2. Its function is as follows. Catalyzes the NAD(+)-dependent oxidation of L-threonine to 2-amino-3-ketobutyrate. This chain is L-threonine 3-dehydrogenase, found in Vibrio parahaemolyticus serotype O3:K6 (strain RIMD 2210633).